The following is a 166-amino-acid chain: NADPH-dependent 7-cyano-7-deazaguanine reductase (166 aa).

Cys57 functions as the Thioimide intermediate in the catalytic mechanism. Catalysis depends on Asp64, which acts as the Proton donor. Substrate-binding positions include 79-81 (VES) and 98-99 (HE).

Belongs to the GTP cyclohydrolase I family. QueF type 1 subfamily.

The protein localises to the cytoplasm. It carries out the reaction 7-aminomethyl-7-carbaguanine + 2 NADP(+) = 7-cyano-7-deazaguanine + 2 NADPH + 3 H(+). The protein operates within tRNA modification; tRNA-queuosine biosynthesis. Its function is as follows. Catalyzes the NADPH-dependent reduction of 7-cyano-7-deazaguanine (preQ0) to 7-aminomethyl-7-deazaguanine (preQ1). This chain is NADPH-dependent 7-cyano-7-deazaguanine reductase, found in Staphylococcus epidermidis (strain ATCC 35984 / DSM 28319 / BCRC 17069 / CCUG 31568 / BM 3577 / RP62A).